The primary structure comprises 283 residues: Glutamate racemase (283 aa).

Residues 7-8 and 39-40 contribute to the substrate site; these read DS and YG. C70 functions as the Proton donor/acceptor in the catalytic mechanism. 71-72 provides a ligand contact to substrate; sequence NT. The active-site Proton donor/acceptor is C206. 207–208 contributes to the substrate binding site; the sequence is TH.

It belongs to the aspartate/glutamate racemases family.

It carries out the reaction L-glutamate = D-glutamate. It participates in cell wall biogenesis; peptidoglycan biosynthesis. Provides the (R)-glutamate required for cell wall biosynthesis. The chain is Glutamate racemase from Phenylobacterium zucineum (strain HLK1).